We begin with the raw amino-acid sequence, 598 residues long: NADH-quinone oxidoreductase subunit C/D (598 aa).

The tract at residues M1 to E189 is NADH dehydrogenase I subunit C. The tract at residues D213–R598 is NADH dehydrogenase I subunit D.

The protein in the N-terminal section; belongs to the complex I 30 kDa subunit family. It in the C-terminal section; belongs to the complex I 49 kDa subunit family. As to quaternary structure, NDH-1 is composed of 13 different subunits. Subunits NuoB, CD, E, F, and G constitute the peripheral sector of the complex.

The protein resides in the cell inner membrane. The enzyme catalyses a quinone + NADH + 5 H(+)(in) = a quinol + NAD(+) + 4 H(+)(out). NDH-1 shuttles electrons from NADH, via FMN and iron-sulfur (Fe-S) centers, to quinones in the respiratory chain. The immediate electron acceptor for the enzyme in this species is believed to be ubiquinone. Couples the redox reaction to proton translocation (for every two electrons transferred, four hydrogen ions are translocated across the cytoplasmic membrane), and thus conserves the redox energy in a proton gradient. This Yersinia pseudotuberculosis serotype O:1b (strain IP 31758) protein is NADH-quinone oxidoreductase subunit C/D.